Consider the following 1341-residue polypeptide: Pleckstrin homology domain-containing family G member 3 (1341 aa).

The tract at residues 1 to 68 (MPVSTALHQD…PNSNNNSSGW (68 aa)) is disordered. Residues 18-29 (SLVSTTSSSGSS) are compositionally biased toward low complexity. 2 stretches are compositionally biased toward polar residues: residues 42–51 (SEASAQNGTG) and 59–68 (PNSNNNSSGW). Serine 76 carries the post-translational modification Phosphoserine. A DH domain is found at 93 to 272 (YLGRVVREIV…TCVAWYINDM (180 aa)). Residues 296-394 (DLTTYGELVL…WTHHIKRLIL (99 aa)) enclose the PH domain. Serine 433 and serine 502 each carry phosphoserine. A disordered region spans residues 433 to 482 (SQDEVSSHVRQGRRQSEPGHTLFSRATLPSRQQGFEMPGLKGRRKSEPTR). Disordered regions lie at residues 508-657 (DFGQ…EFPE) and 684-715 (PEGS…LLPP). Acidic residues-rich tracts occupy residues 529 to 541 (ELEE…EEEE) and 570 to 580 (GSEEEEEEEES). Phosphoserine occurs at positions 571, 694, 695, 737, 759, 762, and 766. Over residues 695-707 (SEEEEEEEMEAAQ) the composition is skewed to acidic residues. The interval 775-832 (SIGDSLSNPPTPEVIIGADMVTDNGPSVNGTESPSAGSGCPTEQDRSSCKKKESALST) is disordered. Over residues 798–810 (NGPSVNGTESPSA) the composition is skewed to polar residues. Positions 817 to 832 (EQDRSSCKKKESALST) are enriched in basic and acidic residues. A phosphoserine mark is found at serine 862, serine 899, serine 900, and serine 947. Disordered regions lie at residues 876-930 (SRFN…EFCP), 939-958 (ERME…SQAN), 1071-1097 (KVTP…SGGK), and 1117-1162 (HGTS…PFDT). Residues 939–948 (ERMESSERSP) are compositionally biased toward basic and acidic residues. Positions 949–958 (RTGSGQSQAN) are enriched in polar residues. Residues serine 1129, serine 1134, serine 1136, serine 1141, serine 1155, serine 1158, and serine 1201 each carry the phosphoserine modification. Residues 1135-1162 (FSPSAVSPRTTSPGARSSARSPLSPFDT) show a composition bias toward polar residues. 2 disordered regions span residues 1204–1249 (ENIV…LNGG) and 1271–1341 (KGPH…NSVG). Over residues 1309–1320 (QPKEHGPRDSAD) the composition is skewed to basic and acidic residues.

The protein localises to the cytoplasm. Its subcellular location is the cytoskeleton. Its function is as follows. Plays a role in controlling cell polarity and cell motility by selectively binding newly polymerized actin and activating RAC1 and CDC42 to enhance local actin polymerization. The polypeptide is Pleckstrin homology domain-containing family G member 3 (Mus musculus (Mouse)).